A 477-amino-acid chain; its full sequence is Stromelysin-1 (477 aa).

A signal peptide spans 1-17; the sequence is MKNLPILLLLCVAACSA. Positions 18–99 are cleaved as a propeptide — activation peptide; the sequence is YPLDRSARDE…SRCGVPDVGH (82 aa). Residues 90-97 carry the Cysteine switch motif; sequence SRCGVPDV. Cys-92 contributes to the Zn(2+) binding site. Asn-120 is a glycosylation site (N-linked (GlcNAc...) asparagine). 2 residues coordinate Ca(2+): Asp-124 and Asp-158. Positions 168 and 170 each coordinate Zn(2+). Positions 175, 176, 178, and 180 each coordinate Ca(2+). His-183 serves as a coordination point for Zn(2+). 3 residues coordinate Ca(2+): Gly-190, Asn-192, and Asp-194. His-196 contributes to the Zn(2+) binding site. Positions 198, 199, and 201 each coordinate Ca(2+). Position 218 (His-218) interacts with Zn(2+). Glu-219 is a catalytic residue. Residues His-222 and His-228 each coordinate Zn(2+). The interval 260 to 285 is disordered; it reads QSLYGPPPASPDSPVEPSEPEPPAPG. 4 Hemopexin repeats span residues 287–336, 337–383, 385–433, and 434–477; these read LAMC…WPSL, PSGI…GFPP, VRKI…FPGI, and DSKL…WFNC. Cys-290 and Cys-477 are disulfide-bonded. Asp-297 provides a ligand contact to Ca(2+). The Ca(2+) site is built by Asp-389 and Asp-438.

This sequence belongs to the peptidase M10A family. The cofactor is Ca(2+). Requires Zn(2+) as cofactor.

Its subcellular location is the secreted. The protein resides in the extracellular space. The protein localises to the extracellular matrix. It catalyses the reaction Preferential cleavage where P1', P2' and P3' are hydrophobic residues.. In terms of biological role, metalloproteinase with a rather broad substrate specificity that can degrade fibronectin, laminin, gelatins of type I, III, IV, and V; collagens III, IV, X, and IX, and cartilage proteoglycans. Activates different molecules including growth factors, plasminogen or other matrix metalloproteinases such as MMP9. Once released into the extracellular matrix (ECM), the inactive pro-enzyme is activated by the plasmin cascade signaling pathway. Also acts intracellularly. For example, in dopaminergic neurons, gets activated by the serine protease HTRA2 upon stress and plays a pivotal role in DA neuronal degeneration by mediating microglial activation and alpha-synuclein/SNCA cleavage. In addition, plays a role in immune response and possesses antiviral activity against various viruses. Mechanistically, translocates from the cytoplasm into the cell nucleus upon virus infection to influence NF-kappa-B activities. The protein is Stromelysin-1 (MMP3) of Equus caballus (Horse).